Consider the following 42-residue polypeptide: Delta-actinopoditoxin-Mb1a (42 aa).

Intrachain disulfides connect Cys1-Cys15, Cys8-Cys20, Cys14-Cys31, and Cys16-Cys42.

It belongs to the neurotoxin 06 (delta-actx) family. Expressed by the venom gland.

The protein localises to the secreted. Functionally, neurotoxin that slows the inactivation of vertebrate tetrodotoxin-sensitive voltage-gated sodium channels (Nav) and most likely insect sodium channels presumably by binding to site 3 of the channel. Effects are an increase in resting tension, a muscle fasciculation and a decrease in indirect twitch tension. It fails to affect tetrodotoxin-resistant sodium currents. In vivo, is lethal to both vertebrates and insects. This chain is Delta-actinopoditoxin-Mb1a, found in Missulena bradleyi (Eastern mouse spider).